The chain runs to 248 residues: Type II secretion system protein N (248 aa).

At 1-6 (MKLKSG) the chain is on the cytoplasmic side. Residues 7 to 27 (IVTGVALVLAYGLFLASYAPA) form a helical; Signal-anchor for type II membrane protein membrane-spanning segment. Topologically, residues 28 to 248 (RLLTAVPLPA…RTLNFQGRLL (221 aa)) are periplasmic.

This sequence belongs to the GSP N family.

It is found in the cell inner membrane. Involved in a type II secretion system (T2SS, formerly general secretion pathway, GSP) for the export of proteins. Required for the translocation of the multiple pectic enzymes. This chain is Type II secretion system protein N (outN), found in Pectobacterium carotovorum subsp. carotovorum (Erwinia carotovora subsp. carotovora).